Here is a 137-residue protein sequence, read N- to C-terminus: Keratin-associated protein 15-1 (137 aa).

This sequence belongs to the PMG family. In terms of assembly, interacts with hair keratins.

Functionally, in the hair cortex, hair keratin intermediate filaments are embedded in an interfilamentous matrix, consisting of hair keratin-associated proteins (KRTAP), which are essential for the formation of a rigid and resistant hair shaft through their extensive disulfide bond cross-linking with abundant cysteine residues of hair keratins. The matrix proteins include the high-sulfur and high-glycine-tyrosine keratins. The protein is Keratin-associated protein 15-1 (KRTAP15-1) of Homo sapiens (Human).